The chain runs to 224 residues: Phosphoribosyltransferase domain-containing protein 1 (224 aa).

Residues E140 and D141 each contribute to the Mg(2+) site. GMP contacts are provided by residues 140 to 148, K172, 193 to 194, and D200; these read EDIINTGRT and FV. Mg(2+) is bound at residue D200.

This sequence belongs to the purine/pyrimidine phosphoribosyltransferase family.

The chain is Phosphoribosyltransferase domain-containing protein 1 (prtfdc1) from Xenopus tropicalis (Western clawed frog).